We begin with the raw amino-acid sequence, 461 residues long: L-cystine uptake protein TcyP (461 aa).

The next 10 helical transmembrane spans lie at 1–21 (MTLF…LLYM), 33–53 (VFTA…IYGS), 72–92 (YVKL…LGAF), 104–124 (ISGL…AVGI), 183–203 (PTST…YLGV), 224–244 (IIMR…LAIM), 262–282 (FVIA…LLIT), 337–357 (LSIG…IMIA), 369–389 (FLFT…GVGG), and 393–413 (FAAL…GLLI).

The protein belongs to the dicarboxylate/amino acid:cation symporter (DAACS) (TC 2.A.23) family.

The protein localises to the membrane. Its function is as follows. Mediates uptake of L-cystine, the oxidized form of L-cysteine. This is L-cystine uptake protein TcyP (tcyP) from Bacillus licheniformis (strain ATCC 14580 / DSM 13 / JCM 2505 / CCUG 7422 / NBRC 12200 / NCIMB 9375 / NCTC 10341 / NRRL NRS-1264 / Gibson 46).